The primary structure comprises 514 residues: ATP synthase subunit alpha (514 aa).

Position 170-177 (170-177) interacts with ATP; the sequence is GDRQIGKT.

It belongs to the ATPase alpha/beta chains family. F-type ATPases have 2 components, CF(1) - the catalytic core - and CF(0) - the membrane proton channel. CF(1) has five subunits: alpha(3), beta(3), gamma(1), delta(1), epsilon(1). CF(0) has three main subunits: a(1), b(2) and c(9-12). The alpha and beta chains form an alternating ring which encloses part of the gamma chain. CF(1) is attached to CF(0) by a central stalk formed by the gamma and epsilon chains, while a peripheral stalk is formed by the delta and b chains.

It is found in the cell inner membrane. It carries out the reaction ATP + H2O + 4 H(+)(in) = ADP + phosphate + 5 H(+)(out). Its function is as follows. Produces ATP from ADP in the presence of a proton gradient across the membrane. The alpha chain is a regulatory subunit. This is ATP synthase subunit alpha from Pseudomonas savastanoi pv. phaseolicola (strain 1448A / Race 6) (Pseudomonas syringae pv. phaseolicola (strain 1448A / Race 6)).